A 158-amino-acid chain; its full sequence is Ribosomal RNA large subunit methyltransferase H (158 aa).

Residues leucine 76, glycine 107, and 126-131 (LSGLTM) contribute to the S-adenosyl-L-methionine site.

It belongs to the RNA methyltransferase RlmH family. As to quaternary structure, homodimer.

It localises to the cytoplasm. The catalysed reaction is pseudouridine(1915) in 23S rRNA + S-adenosyl-L-methionine = N(3)-methylpseudouridine(1915) in 23S rRNA + S-adenosyl-L-homocysteine + H(+). Specifically methylates the pseudouridine at position 1915 (m3Psi1915) in 23S rRNA. This is Ribosomal RNA large subunit methyltransferase H from Teredinibacter turnerae (strain ATCC 39867 / T7901).